We begin with the raw amino-acid sequence, 382 residues long: 3-isopropylmalate dehydrogenase (382 aa).

91 to 102 (GPKWGTGSVRPE) contacts NAD(+). Substrate-binding residues include Arg109, Arg119, Arg148, and Asp240. Mg(2+) contacts are provided by Asp240, Asp265, and Asp269. NAD(+) is bound at residue 304–315 (GSAPDLTENKVN).

Belongs to the isocitrate and isopropylmalate dehydrogenases family. As to quaternary structure, homodimer. Requires Mg(2+) as cofactor. The cofactor is Mn(2+).

It localises to the cytoplasm. The catalysed reaction is (2R,3S)-3-isopropylmalate + NAD(+) = 4-methyl-2-oxopentanoate + CO2 + NADH. It functions in the pathway amino-acid biosynthesis; L-leucine biosynthesis; L-leucine from 3-methyl-2-oxobutanoate: step 3/4. Catalyzes the oxidation of 3-carboxy-2-hydroxy-4-methylpentanoate (3-isopropylmalate) to 3-carboxy-4-methyl-2-oxopentanoate. The product decarboxylates to 4-methyl-2 oxopentanoate. In Debaryomyces hansenii (strain ATCC 36239 / CBS 767 / BCRC 21394 / JCM 1990 / NBRC 0083 / IGC 2968) (Yeast), this protein is 3-isopropylmalate dehydrogenase (LEU2).